Here is a 966-residue protein sequence, read N- to C-terminus: Valine--tRNA ligase (966 aa).

Positions 48–58 match the 'HIGH' region motif; it reads PNITGGLHLGH. Positions 348–368 form a coiled coil; sequence DYKDARKKIIEECKRLKILED. A 'KMSKS' region motif is present at residues 566-570; it reads KMSKS. Lysine 569 lines the ATP pocket. The stretch at 939–960 forms a coiled coil; that stretch reads FKKSQEKLNHYNKTKNKLLNQY.

It belongs to the class-I aminoacyl-tRNA synthetase family. ValS type 1 subfamily. As to quaternary structure, monomer.

It localises to the cytoplasm. It carries out the reaction tRNA(Val) + L-valine + ATP = L-valyl-tRNA(Val) + AMP + diphosphate. Functionally, catalyzes the attachment of valine to tRNA(Val). As ValRS can inadvertently accommodate and process structurally similar amino acids such as threonine, to avoid such errors, it has a 'posttransfer' editing activity that hydrolyzes mischarged Thr-tRNA(Val) in a tRNA-dependent manner. In Blochmanniella floridana, this protein is Valine--tRNA ligase.